An 848-amino-acid polypeptide reads, in one-letter code: Aryl hydrocarbon receptor (848 aa).

N-acetylmethionine is present on Met-1. A propeptide spanning residues 1–10 (MNSSSANITY) is cleaved from the precursor. Residues 1–10 (MNSSSANITY) are compositionally biased toward polar residues. Positions 1-39 (MNSSSANITYASRKRRKPVQKTVKPIPAEGIKSNPSKRH) are disordered. 2 consecutive short sequence motifs (nuclear localization signal) follow at residues 13–16 (RKRR) and 37–42 (KRHRDR). Positions 27-80 (PAEGIKSNPSKRHRDRLNTELDRLASLLPFPQDVINKLDKLSVLRLSVSYLRAK) constitute a bHLH domain. A DNA-binding region spans residues 38-66 (RHRDRLNTELDRLASLLPFPQDVINKLDK). 3 required for maintaining the overall integrity of the AHR:ARNT heterodimer and its transcriptional activity regions span residues 50–82 (LASL…AKSF), 118–126 (LLQALNGFV), and 266–268 (FAI). The short motif at 64–72 (LDKLSVLRL) is the Nuclear export signal element. In terms of domain architecture, PAS 1 spans 111 to 181 (NLQEGEFLLQ…RQLHWALNPS (71 aa)). Positions 275–342 (PSILEIRTKN…CAESHIRMIK (68 aa)) constitute a PAS 2 domain. Residues 348–386 (MIVFRLLTKNNRWTWVQSNARLLYKNGRPDYIIVTQRPL) form the PAC domain. Positions 824–848 (TTHLQPLHHPSEARPFPDLTSSGFL) are disordered.

Homodimer. Heterodimer; efficient DNA binding requires dimerization with another bHLH protein. Interacts with ARNT; the heterodimer ARNT:AHR binds to core DNA sequence 5'-TGCGTG-3' within the dioxin response element (DRE) of target gene promoters and activates their transcription. Binds MYBBP1A. Interacts with coactivators including SRC-1, RIP140 and NOCA7, and with the corepressor SMRT. Interacts with NEDD8 and IVNS1ABP. Interacts with BMAL1. Interacts with HSP90AB1. Interacts with TIPARP; leading to mono-ADP-ribosylation of AHR and subsequent inhibition of AHR. In terms of processing, mono-ADP-ribosylated, leading to inhibit transcription activator activity of AHR. In terms of tissue distribution, expressed in all tissues tested including blood, brain, heart, kidney, liver, lung, pancreas and skeletal muscle. Expressed in retinal photoreceptors.

The protein resides in the cytoplasm. It localises to the nucleus. Ligand-activated transcription factor that enables cells to adapt to changing conditions by sensing compounds from the environment, diet, microbiome and cellular metabolism, and which plays important roles in development, immunity and cancer. Upon ligand binding, translocates into the nucleus, where it heterodimerizes with ARNT and induces transcription by binding to xenobiotic response elements (XRE). Regulates a variety of biological processes, including angiogenesis, hematopoiesis, drug and lipid metabolism, cell motility and immune modulation. Xenobiotics can act as ligands: upon xenobiotic-binding, activates the expression of multiple phase I and II xenobiotic chemical metabolizing enzyme genes (such as the CYP1A1 gene). Mediates biochemical and toxic effects of halogenated aromatic hydrocarbons. Next to xenobiotics, natural ligands derived from plants, microbiota, and endogenous metabolism are potent AHR agonists. Tryptophan (Trp) derivatives constitute an important class of endogenous AHR ligands. Acts as a negative regulator of anti-tumor immunity: indoles and kynurenic acid generated by Trp catabolism act as ligand and activate AHR, thereby promoting AHR-driven cancer cell motility and suppressing adaptive immunity. Regulates the circadian clock by inhibiting the basal and circadian expression of the core circadian component PER1. Inhibits PER1 by repressing the CLOCK-BMAL1 heterodimer mediated transcriptional activation of PER1. The heterodimer ARNT:AHR binds to core DNA sequence 5'-TGCGTG-3' within the dioxin response element (DRE) of target gene promoters and activates their transcription. The protein is Aryl hydrocarbon receptor of Homo sapiens (Human).